The primary structure comprises 270 residues: Phosphatidylglycerol--prolipoprotein diacylglyceryl transferase (270 aa).

The next 4 helical transmembrane spans lie at 19–39, 56–76, 92–112, and 116–136; these read FPVYWYGIIIGTGVLLGLWLA, LVLIAVPIAILFARMYYVIFE, QGGLAIHGGLIGAVITGVLFA, and GVSFWKLADIAAPSILLGQAI. Arginine 138 is a binding site for a 1,2-diacyl-sn-glycero-3-phospho-(1'-sn-glycerol). The next 3 helical transmembrane spans lie at 178–198, 206–226, and 236–256; these read HPTFLYESLWNFAGVILLLAL, GELFFTYLIWYSVGRFFVEGL, and LRIAQVMSIGLVVISIIFIIV.

Belongs to the Lgt family.

It localises to the cell membrane. It carries out the reaction L-cysteinyl-[prolipoprotein] + a 1,2-diacyl-sn-glycero-3-phospho-(1'-sn-glycerol) = an S-1,2-diacyl-sn-glyceryl-L-cysteinyl-[prolipoprotein] + sn-glycerol 1-phosphate + H(+). It functions in the pathway protein modification; lipoprotein biosynthesis (diacylglyceryl transfer). Functionally, catalyzes the transfer of the diacylglyceryl group from phosphatidylglycerol to the sulfhydryl group of the N-terminal cysteine of a prolipoprotein, the first step in the formation of mature lipoproteins. The protein is Phosphatidylglycerol--prolipoprotein diacylglyceryl transferase of Bacillus cereus (strain B4264).